The chain runs to 561 residues: DNA ligase B (561 aa).

Lys125 (N6-AMP-lysine intermediate) is an active-site residue.

It belongs to the NAD-dependent DNA ligase family. LigB subfamily.

The enzyme catalyses NAD(+) + (deoxyribonucleotide)n-3'-hydroxyl + 5'-phospho-(deoxyribonucleotide)m = (deoxyribonucleotide)n+m + AMP + beta-nicotinamide D-nucleotide.. In terms of biological role, catalyzes the formation of phosphodiester linkages between 5'-phosphoryl and 3'-hydroxyl groups in double-stranded DNA using NAD as a coenzyme and as the energy source for the reaction. In Salmonella enteritidis PT4 (strain P125109), this protein is DNA ligase B.